Consider the following 471-residue polypeptide: Protein naked cuticle homolog 1 (471 aa).

2 disordered regions span residues 1–23 and 41–82; these read MGKLHSKPAAVCKRRESPEGDSF and QRCP…DEDD. Residue glycine 2 is the site of N-myristoyl glycine attachment. Over residues 62–75 the composition is skewed to basic and acidic residues; the sequence is GTRELVGDTSREAL. The interaction with DVL1, DVL2 and DVL3 stretch occupies residues 125–190; that stretch reads QCDVSVEEDS…LRVKLTVAPD (66 aa). An EF-hand domain is found at 131-166; that stretch reads EEDSRQEWTFTLYDFDNNGKVTREDITSLLHTIYEV. Ca(2+) is bound by residues aspartate 144, aspartate 146, asparagine 148, lysine 150, and aspartate 155. Disordered stretches follow at residues 273-314, 337-382, and 448-471; these read GPGS…QGVD, GTQD…SPSA, and QAVQRHEHHHHHEHHHHYHHFYQP. Basic residues predominate over residues 453 to 471; it reads HEHHHHHEHHHHYHHFYQP.

It belongs to the NKD family. In terms of assembly, interacts with DVL1, DVL2, DVL3 and PPP2R3A. In terms of tissue distribution, highly expressed in lung. Also expressed in brain, heart, kidney, liver, skin, stomach and testis. Within the testis expression is found in the seminiferous epithelium and round and elongating spermatids.

The protein localises to the cell membrane. The protein resides in the cytoplasm. Its function is as follows. Cell autonomous antagonist of the canonical Wnt signaling pathway. May activate a second Wnt signaling pathway that controls planar cell polarity. Required for spermatogenesis. This chain is Protein naked cuticle homolog 1 (Nkd1), found in Mus musculus (Mouse).